Here is a 68-residue protein sequence, read N- to C-terminus: DNA-directed RNA polymerase subunit omega (68 aa).

It belongs to the RNA polymerase subunit omega family. The RNAP catalytic core consists of 2 alpha, 1 beta, 1 beta' and 1 omega subunit. When a sigma factor is associated with the core the holoenzyme is formed, which can initiate transcription.

It carries out the reaction RNA(n) + a ribonucleoside 5'-triphosphate = RNA(n+1) + diphosphate. In terms of biological role, promotes RNA polymerase assembly. Latches the N- and C-terminal regions of the beta' subunit thereby facilitating its interaction with the beta and alpha subunits. In Dechloromonas aromatica (strain RCB), this protein is DNA-directed RNA polymerase subunit omega.